The sequence spans 322 residues: Probable cell division protein WhiA (322 aa).

Positions serine 279–serine 312 form a DNA-binding region, H-T-H motif.

This sequence belongs to the WhiA family.

Involved in cell division and chromosome segregation. The protein is Probable cell division protein WhiA of Desulforamulus reducens (strain ATCC BAA-1160 / DSM 100696 / MI-1) (Desulfotomaculum reducens).